We begin with the raw amino-acid sequence, 325 residues long: MSLKSLLKGFKRPKKIEFNTEANTPNYGKFVAEPFERGFATTIGNSLRRTLMSSIEGAAISAIRIEGVNHEFSFIEGVAEDVTRIILNLKQVRIKYEPEEKDQSKIIHLELKGAGYFRAGDLAVDSSIEIMNPDLHIATLNEDANLVMDLEIQRGRGYVPAEEKKKDIEVLGTIPVDSIFSPVQKVVFEVSETRVAQRSDYEKLTLEVWTDGSVSPDDAVAQAAKILKEHLTVFINFEEELEEEDDELDEADEKLKASLSKHVEELELSVRSLNVLRSLEIDFIGDLVKRSEEEMSKSKHYSDQCLQELKVKLSTLGLSFGMRDF.

The segment at 1-238 is alpha N-terminal domain (alpha-NTD); sequence MSLKSLLKGF…EHLTVFINFE (238 aa). Positions 255–325 are alpha C-terminal domain (alpha-CTD); that stretch reads LKASLSKHVE…LGLSFGMRDF (71 aa).

The protein belongs to the RNA polymerase alpha chain family. In terms of assembly, homodimer. The RNAP catalytic core consists of 2 alpha, 1 beta, 1 beta' and 1 omega subunit. When a sigma factor is associated with the core the holoenzyme is formed, which can initiate transcription.

The enzyme catalyses RNA(n) + a ribonucleoside 5'-triphosphate = RNA(n+1) + diphosphate. Functionally, DNA-dependent RNA polymerase catalyzes the transcription of DNA into RNA using the four ribonucleoside triphosphates as substrates. The protein is DNA-directed RNA polymerase subunit alpha of Leptospira interrogans serogroup Icterohaemorrhagiae serovar copenhageni (strain Fiocruz L1-130).